The following is a 204-amino-acid chain: Ubiquitin-conjugating enzyme E2 S (204 aa).

Residues 14–160 (QIIKQVAREI…AKMFTEIHAK (147 aa)) enclose the UBC core domain. Cys-98 functions as the Glycyl thioester intermediate in the catalytic mechanism. The span at 165–176 (SSNNISEGQQES) shows a compositional bias: polar residues. Positions 165–204 (SSNNISEGQQESLPGKKRVAVNEKMCDKKKKDKKRALKRL) are disordered. Over residues 191 to 204 (DKKKKDKKRALKRL) the composition is skewed to basic residues.

This sequence belongs to the ubiquitin-conjugating enzyme family.

It catalyses the reaction S-ubiquitinyl-[E1 ubiquitin-activating enzyme]-L-cysteine + [E2 ubiquitin-conjugating enzyme]-L-cysteine = [E1 ubiquitin-activating enzyme]-L-cysteine + S-ubiquitinyl-[E2 ubiquitin-conjugating enzyme]-L-cysteine.. It participates in protein modification; protein ubiquitination. Functionally, catalyzes the covalent attachment of ubiquitin to other proteins. Acts as an essential factor of the anaphase promoting complex/cyclosome (APC/C), a cell cycle-regulated ubiquitin ligase that controls progression through mitosis. Acts by specifically elongating polyubiquitin chains initiated by the E2 enzyme UBCH10 on APC/C substrates, enhancing the degradation of APC/C substrates by the proteasome and promoting mitotic exit. This is Ubiquitin-conjugating enzyme E2 S from Nematostella vectensis (Starlet sea anemone).